Here is a 903-residue protein sequence, read N- to C-terminus: Dynamin-like GTPase msp1, mitochondrial (903 aa).

The N-terminal 78 residues, 1–78, are a transit peptide targeting the mitochondrion; that stretch reads MGISWFLSRF…RFFSFSSISR (78 aa). A helical transmembrane segment spans residues 86–103; the sequence is LPVAGFSLVAGGAAYIGA. Basic and acidic residues predominate over residues 167–188; the sequence is VLQAERAKEHRSNSNDKQKSSD. Residues 167 to 198 form a disordered region; it reads VLQAERAKEHRSNSNDKQKSSDNDEDPNDTTV. Residues 198-214 traverse the membrane as a helical segment; the sequence is VGIGAALAASILSVDSV. A Dynamin-type G domain is found at 260–531; that stretch reads AVTLPSIVVI…LEYTMSKNLQ (272 aa). The interval 270–277 is G1 motif; the sequence is GSQSSGKS. Serine 273, serine 274, glycine 275, lysine 276, serine 277, serine 278, and glycine 292 together coordinate GTP. Residue serine 277 coordinates Mg(2+). The tract at residues 296-298 is G2 motif; the sequence is VTR. Mg(2+) is bound by residues threonine 297 and aspartate 370. The G3 motif stretch occupies residues 370-373; sequence DLPG. A G4 motif region spans residues 438–441; that stretch reads TKMD. Residues lysine 439, aspartate 441, and serine 468 each coordinate GTP. A G5 motif region spans residues 467-470; sequence ISRI. The interval 691–805 is paddle region; the sequence is ATSEQVENCV…VLKSRACKHK (115 aa). Cysteine 802 and cysteine 811 are joined by a disulfide. The 94-residue stretch at 805 to 898 folds into the GED domain; the sequence is KEAKYTCPEI…KINSLVILEQ (94 aa).

It belongs to the TRAFAC class dynamin-like GTPase superfamily. Dynamin/Fzo/YdjA family. As to quaternary structure, homooligomer. Interacts with cdr1. Cleavage of the transit peptide by mitochondrial processing protease (MPP) produces a long integral membrane form of msp1 (l-msp1). Further processing by a rhomboid protease after the transmembrane regions produces a short peripheral membrane form of msp1 (s-msp1). Both isoforms are required for full activity.

The protein resides in the mitochondrion inner membrane. It localises to the mitochondrion intermembrane space. The catalysed reaction is GTP + H2O = GDP + phosphate + H(+). Functionally, dynamin-related GTPase that is essential for normal mitochondrial morphology by mediating fusion of the mitochondrial inner membranes and maintaining respiratory chain function. Exists in two forms: the transmembrane, long form (Dynamin-like GTPase msp1, long form; l-msp1), which is tethered to the inner mitochondrial membrane, and the short soluble form (Dynamin-like GTPase msp1, short form; s-msp1), which results from proteolytic cleavage and localizes in the intermembrane space. Both forms (l-msp1 and s-msp1) cooperate to catalyze the fusion of the mitochondrial inner membrane. Its role in mitochondrial morphology is required for mitochondrial genome maintenance. In terms of biological role, constitutes the transmembrane long form (l-msp1) that plays a central role in mitochondrial inner membrane fusion. L-msp1 and the soluble short form (s-msp1) form higher-order helical assemblies that coordinate the fusion of mitochondrial inner membranes. Inner membrane-anchored l-msp1 molecules initiate membrane remodeling by recruiting soluble s-msp1 to rapidly polymerize into a flexible cylindrical scaffold encaging the mitochondrial inner membrane. Once at the membrane surface, the formation of s-msp1 helices induce bilayer curvature. Msp1 dimerization through the paddle region, which inserts into cardiolipin-containing membrane, promotes GTP hydrolysis and the helical assembly of a flexible msp1 lattice on the membrane, which drives membrane curvature and mitochondrial fusion. Constitutes the soluble short form (s-msp1) generated by cleavage, which plays a central role in mitochondrial inner membrane fusion. The transmembrane long form (l-msp1) and the s-msp1 form higher-order helical assemblies that coordinate the fusion of mitochondrial inner membranes. Inner membrane-anchored l-msp1 molecules initiate membrane remodeling by recruiting soluble s-msp1 to rapidly polymerize into a flexible cylindrical scaffold encaging the mitochondrial inner membrane. Once at the membrane surface, the formation of s-msp1 helices induce bilayer curvature. Msp1 dimerization through the paddle region, which inserts into cardiolipin-containing membrane, promotes GTP hydrolysis and the helical assembly of a flexible msp1 lattice on the membrane, which drives membrane curvature and mitochondrial fusion. This Schizosaccharomyces pombe (strain 972 / ATCC 24843) (Fission yeast) protein is Dynamin-like GTPase msp1, mitochondrial.